Reading from the N-terminus, the 462-residue chain is uncharacterized protein (462 aa).

6 residues coordinate a divalent metal cation: Asp12, His14, Asp48, Asn81, His179, and His202. Residues 258 to 291 are a coiled coil; sequence ESAETKAFLNEKEREAEEKLSDAVAELAQDAEVK.

Belongs to the metallophosphoesterase superfamily. Requires a divalent metal cation as cofactor.

This is an uncharacterized protein from Bacillus subtilis (strain 168).